A 353-amino-acid chain; its full sequence is Phosphate acyltransferase (353 aa).

Belongs to the PlsX family. In terms of assembly, homodimer. Probably interacts with PlsY.

It is found in the cytoplasm. It carries out the reaction a fatty acyl-[ACP] + phosphate = an acyl phosphate + holo-[ACP]. Its pathway is lipid metabolism; phospholipid metabolism. Its function is as follows. Catalyzes the reversible formation of acyl-phosphate (acyl-PO(4)) from acyl-[acyl-carrier-protein] (acyl-ACP). This enzyme utilizes acyl-ACP as fatty acyl donor, but not acyl-CoA. In Afipia carboxidovorans (strain ATCC 49405 / DSM 1227 / KCTC 32145 / OM5) (Oligotropha carboxidovorans), this protein is Phosphate acyltransferase.